We begin with the raw amino-acid sequence, 284 residues long: Riboflavin transporter (284 aa).

EamA domains lie at 2–129 and 141–273; these read VAAC…LIII and LLPI…SLYL. 8 helical membrane-spanning segments follow: residues 26–46, 58–78, 82–102, 115–135, 136–156, 167–187, 195–215, and 247–267; these read SVII…PLLV, FGLH…WIYA, VPIW…ILCA, LLTT…WSDS, YTVY…YSVM, ASIS…LWLA, ITAP…FTAL, and GWIV…ALII.

The protein belongs to the drug/metabolite transporter (DMT) superfamily. 10 TMS drug/metabolite exporter (DME) (TC 2.A.7.3) family.

It is found in the cell membrane. Functionally, transports riboflavin into the cell. This is Riboflavin transporter from Brucella anthropi (strain ATCC 49188 / DSM 6882 / CCUG 24695 / JCM 21032 / LMG 3331 / NBRC 15819 / NCTC 12168 / Alc 37) (Ochrobactrum anthropi).